A 971-amino-acid chain; its full sequence is uncharacterized protein (971 aa).

The N-terminal stretch at 1-24 (MQSNLLKVLGVLAIVATLVCFIFA) is a signal peptide. Positions 127-146 (RTRPGKSNLDDSGQMIPIPR) are disordered. The next 6 membrane-spanning stretches (helical) occupy residues 611 to 631 (IKAI…LGFA), 721 to 741 (LGLS…IVII), 753 to 773 (AFMA…FLLF), 795 to 815 (VVMM…LDFV), 832 to 852 (FIGT…INWF), and 865 to 885 (GVNM…YGYV). The segment at 933–971 (TGRAKSRLEQRNRTLEHAEQNSKKYKKRIGENTNEETLK) is disordered. Over residues 938-954 (SRLEQRNRTLEHAEQNS) the composition is skewed to basic and acidic residues.

The protein belongs to the TrbL/VirB6 family.

It localises to the cell membrane. This is an uncharacterized protein from Rickettsia prowazekii (strain Madrid E).